The following is a 223-amino-acid chain: Phosphoribosylformylglycinamidine synthase subunit PurQ (223 aa).

A Glutamine amidotransferase type-1 domain is found at serine 3–alanine 223. The active-site Nucleophile is cysteine 86. Catalysis depends on residues histidine 196 and glutamate 198.

As to quaternary structure, part of the FGAM synthase complex composed of 1 PurL, 1 PurQ and 2 PurS subunits.

Its subcellular location is the cytoplasm. It catalyses the reaction N(2)-formyl-N(1)-(5-phospho-beta-D-ribosyl)glycinamide + L-glutamine + ATP + H2O = 2-formamido-N(1)-(5-O-phospho-beta-D-ribosyl)acetamidine + L-glutamate + ADP + phosphate + H(+). It carries out the reaction L-glutamine + H2O = L-glutamate + NH4(+). The protein operates within purine metabolism; IMP biosynthesis via de novo pathway; 5-amino-1-(5-phospho-D-ribosyl)imidazole from N(2)-formyl-N(1)-(5-phospho-D-ribosyl)glycinamide: step 1/2. Functionally, part of the phosphoribosylformylglycinamidine synthase complex involved in the purines biosynthetic pathway. Catalyzes the ATP-dependent conversion of formylglycinamide ribonucleotide (FGAR) and glutamine to yield formylglycinamidine ribonucleotide (FGAM) and glutamate. The FGAM synthase complex is composed of three subunits. PurQ produces an ammonia molecule by converting glutamine to glutamate. PurL transfers the ammonia molecule to FGAR to form FGAM in an ATP-dependent manner. PurS interacts with PurQ and PurL and is thought to assist in the transfer of the ammonia molecule from PurQ to PurL. The sequence is that of Phosphoribosylformylglycinamidine synthase subunit PurQ from Rhizobium johnstonii (strain DSM 114642 / LMG 32736 / 3841) (Rhizobium leguminosarum bv. viciae).